Consider the following 205-residue polypeptide: ATP synthase subunit b (205 aa).

A helical membrane pass occupies residues 45–65 (LGMTATAWVSLAMVIVILLLL).

It belongs to the ATPase B chain family. F-type ATPases have 2 components, F(1) - the catalytic core - and F(0) - the membrane proton channel. F(1) has five subunits: alpha(3), beta(3), gamma(1), delta(1), epsilon(1). F(0) has three main subunits: a(1), b(2) and c(10-14). The alpha and beta chains form an alternating ring which encloses part of the gamma chain. F(1) is attached to F(0) by a central stalk formed by the gamma and epsilon chains, while a peripheral stalk is formed by the delta and b chains.

It is found in the cell inner membrane. Its function is as follows. F(1)F(0) ATP synthase produces ATP from ADP in the presence of a proton or sodium gradient. F-type ATPases consist of two structural domains, F(1) containing the extramembraneous catalytic core and F(0) containing the membrane proton channel, linked together by a central stalk and a peripheral stalk. During catalysis, ATP synthesis in the catalytic domain of F(1) is coupled via a rotary mechanism of the central stalk subunits to proton translocation. Functionally, component of the F(0) channel, it forms part of the peripheral stalk, linking F(1) to F(0). The protein is ATP synthase subunit b of Rhizorhabdus wittichii (strain DSM 6014 / CCUG 31198 / JCM 15750 / NBRC 105917 / EY 4224 / RW1) (Sphingomonas wittichii).